Consider the following 120-residue polypeptide: Natriuretic peptide (120 aa).

The first 25 residues, 1–25 (MVGLSRLADGGLLLVLALLPLALDG), serve as a signal peptide directing secretion. Positions 26–70 (KPAPLEKAPMAPARIIPYLRPVGKESRAALDRMVPPEDGDSRRLE) are excised as a propeptide. A disulfide bridge links Cys81 with Cys97. Positions 110–120 (ILPYLRPIRKE) are excised as a propeptide.

The protein belongs to the natriuretic peptide family. In terms of tissue distribution, expressed by the venom gland.

It localises to the secreted. Natriuretic peptide that dose-dependently induces the rapid relaxation of rat aortic strips phenylephrine-precontracted. Acts by stimulating cGMP production in a dose-dependent manner (by probably activating NPR1 and/or NPR2). May also show potent hypotensive effects. This is Natriuretic peptide from Micrurus altirostris (Uruguayan coral snake).